The sequence spans 102 residues: Iron-sulfur cluster assembly protein CyaY (102 aa).

The protein belongs to the frataxin family.

In terms of biological role, involved in iron-sulfur (Fe-S) cluster assembly. May act as a regulator of Fe-S biogenesis. The protein is Iron-sulfur cluster assembly protein CyaY of Histophilus somni (strain 2336) (Haemophilus somnus).